Here is a 377-residue protein sequence, read N- to C-terminus: Histone deacetylase 8 (377 aa).

Residues 14–324 (LPPVYIYSPE…WTYLTGVILG (311 aa)) form a histone deacetylase region. A Phosphoserine modification is found at serine 39. Aspartate 101 serves as a coordination point for substrate. Catalysis depends on histidine 143, which acts as the Proton acceptor. Residue glycine 151 coordinates substrate. The a divalent metal cation site is built by aspartate 178, histidine 180, and aspartate 267. Tyrosine 306 is a binding site for substrate.

It belongs to the histone deacetylase family. HD type 1 subfamily. Interacts with CBFA2T3. Interacts with phosphorylated SMG5/EST1B; this interaction protects SMG5 from ubiquitin-mediated degradation. Associates with alpha-SMA (smooth muscle alpha-actin). Requires a divalent metal cation as cofactor. Phosphorylated by PKA on serine 39. Phosphorylation reduces deacetylase activity observed preferentially on histones H3 and H4.

The protein localises to the nucleus. The protein resides in the chromosome. It is found in the cytoplasm. The catalysed reaction is N(6)-acetyl-L-lysyl-[histone] + H2O = L-lysyl-[histone] + acetate. The enzyme catalyses N(6)-acetyl-L-lysyl-[protein] + H2O = L-lysyl-[protein] + acetate. It carries out the reaction N(6)-(2E)-butenoyl-L-lysyl-[protein] + H2O = (2E)-2-butenoate + L-lysyl-[protein]. Its activity is inhibited by trichostatin A (TSA) and butyrate, 2 well known histone deacetylase inhibitors. histone deacetylase inhibitor. In terms of biological role, histone deacetylase that catalyzes the deacetylation of lysine residues on the N-terminal part of the core histones (H2A, H2B, H3 and H4). Histone deacetylation gives a tag for epigenetic repression and plays an important role in transcriptional regulation, cell cycle progression and developmental events. Histone deacetylases act via the formation of large multiprotein complexes. Also involved in the deacetylation of cohesin complex protein SMC3 regulating release of cohesin complexes from chromatin. May play a role in smooth muscle cell contractility. In addition to protein deacetylase activity, also has protein-lysine deacylase activity: acts as a protein decrotonylase by mediating decrotonylation ((2E)-butenoyl) of histones. The polypeptide is Histone deacetylase 8 (Hdac8) (Mus musculus (Mouse)).